The chain runs to 357 residues: Major outer membrane protein P.IB (357 aa).

A signal peptide spans Met-1–Ala-19.

It belongs to the Gram-negative porin family. In terms of assembly, homotrimer.

It localises to the cell outer membrane. Functionally, serves as a slightly cation selective porin. The protein is Major outer membrane protein P.IB (por) of Neisseria sicca.